The primary structure comprises 253 residues: 5'-nucleotidase SurE (253 aa).

The a divalent metal cation site is built by Asp-8, Asp-9, Ser-39, and Asn-92.

It belongs to the SurE nucleotidase family. A divalent metal cation is required as a cofactor.

It is found in the cytoplasm. The enzyme catalyses a ribonucleoside 5'-phosphate + H2O = a ribonucleoside + phosphate. In terms of biological role, nucleotidase that shows phosphatase activity on nucleoside 5'-monophosphates. The chain is 5'-nucleotidase SurE from Burkholderia pseudomallei (strain 1710b).